Reading from the N-terminus, the 126-residue chain is Anti-adapter protein IraD (126 aa).

The protein belongs to the GpW/Gp25 family. IraD subfamily. Interacts with RssB.

The protein resides in the cytoplasm. Functionally, inhibits RpoS proteolysis by regulating RssB activity, thereby increasing the stability of the sigma stress factor RpoS during oxidative stress. Its effect on RpoS stability is due to its interaction with RssB, which probably blocks the interaction of RssB with RpoS, and the consequent delivery of the RssB-RpoS complex to the ClpXP protein degradation pathway. This Salmonella enteritidis PT4 (strain P125109) protein is Anti-adapter protein IraD.